We begin with the raw amino-acid sequence, 166 residues long: Large ribosomal subunit protein uL10 (166 aa).

It belongs to the universal ribosomal protein uL10 family. Part of the ribosomal stalk of the 50S ribosomal subunit. The N-terminus interacts with L11 and the large rRNA to form the base of the stalk. The C-terminus forms an elongated spine to which L12 dimers bind in a sequential fashion forming a multimeric L10(L12)X complex.

In terms of biological role, forms part of the ribosomal stalk, playing a central role in the interaction of the ribosome with GTP-bound translation factors. The sequence is that of Large ribosomal subunit protein uL10 from Bacillus cereus (strain ATCC 14579 / DSM 31 / CCUG 7414 / JCM 2152 / NBRC 15305 / NCIMB 9373 / NCTC 2599 / NRRL B-3711).